The chain runs to 106 residues: Toxin-like structure LSTX-D6 (106 aa).

Residues Met1–Ser20 form the signal peptide. The propeptide occupies Glu21 to Arg41. 4 disulfides stabilise this stretch: Cys45–Cys60, Cys52–Cys69, Cys59–Cys85, and Cys71–Cys83.

Belongs to the neurotoxin 19 (CSTX) family. 02 (D7) subfamily. As to expression, expressed by the venom gland.

It is found in the secreted. The sequence is that of Toxin-like structure LSTX-D6 from Lycosa singoriensis (Wolf spider).